Consider the following 147-residue polypeptide: Ribonuclease 4 (147 aa).

An N-terminal signal peptide occupies residues 1–28 (MALQRTHSLLLLLLLTLLGLGLVQPSYG). Glutamine 29 bears the Pyrrolidone carboxylic acid mark. 5 residues coordinate dUMP: arginine 35, histidine 40, lysine 68, asparagine 71, and threonine 72. The active-site Proton acceptor is the histidine 40. Intrachain disulfides connect cysteine 53–cysteine 109, cysteine 67–cysteine 120, cysteine 85–cysteine 135, and cysteine 92–cysteine 99. The active-site Proton donor is histidine 144. Phenylalanine 145 serves as a coordination point for dUMP.

The protein belongs to the pancreatic ribonuclease family. In terms of tissue distribution, expressed in the cortical and medullary tubules of the kidney, and in the transitional epithelium of the urinary bladder (at protein level).

Its subcellular location is the secreted. Functionally, cleaves preferentially after uridine bases. Has antimicrobial activity against uropathogenic E.coli (UPEC). Probably contributes to urinary tract sterility. This is Ribonuclease 4 (RNASE4) from Homo sapiens (Human).